Consider the following 243-residue polypeptide: Outer membrane protein A (243 aa).

5 consecutive transmembrane segments (beta stranded) span residues 1-8, 13-21, 48-57, 62-69, and 88-96; these read LAAKLSYP, LDIYTRLGG, PLAAVGVEYA, WATRLDYQ, and MLSLGVSYR. 5 tandem repeats follow at residues 104–105, 106–107, 108–109, 110–111, and 112–113. Positions 104–113 are 5 X 2 AA tandem repeats of A-P; it reads APAPAPAPAP. Residues 115 to 243 form the OmpA-like domain; sequence VETKLFTLKS…RRVEIEVKGI (129 aa). Cysteines 215 and 229 form a disulfide.

It belongs to the outer membrane OOP (TC 1.B.6) superfamily. OmpA family. In terms of assembly, monomer and homodimer.

It is found in the cell outer membrane. Its function is as follows. With TolR probably plays a role in maintaining the position of the peptidoglycan cell wall in the periplasm. Acts as a porin with low permeability that allows slow penetration of small solutes; an internal gate slows down solute passage. The protein is Outer membrane protein A of Serratia odorifera.